A 525-amino-acid polypeptide reads, in one-letter code: Arylsulfatase G (525 aa).

Positions 1-16 (MGWLFLKVLLVGMAFS) are cleaved as a signal peptide. 3 residues coordinate Ca(2+): D44, D45, and C84. The active-site Nucleophile is the C84. C84 bears the 3-oxoalanine (Cys) mark. N117 carries N-linked (GlcNAc...) asparagine glycosylation. K137 serves as a coordination point for substrate. The active site involves H139. S162 contacts substrate. N-linked (GlcNAc...) asparagine glycosylation occurs at N215. H251 serves as a coordination point for substrate. 2 residues coordinate Ca(2+): D302 and N303. N-linked (GlcNAc...) asparagine glycans are attached at residues N356 and N497.

It belongs to the sulfatase family. Requires Ca(2+) as cofactor. N-glycosylated with both high mannose and complex type sugars. Post-translationally, the conversion to 3-oxoalanine (also known as C-formylglycine, FGly), of a serine or cysteine residue in prokaryotes and of a cysteine residue in eukaryotes, is critical for catalytic activity. In terms of processing, the 63-kDa precursor undergoes proteolytic processing in two steps, yielding two fragments in the first step (apparent molecular masses of 44 and 18 kDa). In the second step, the 44-kDa fragment is processed further to the 34- and 10-kDa chains. The 10-kDa chain is a cleavage product of the 44-kDa fragment but linked to the 18-kDa chain through a disulfide bridge. In terms of tissue distribution, highly expressed in the spleen, kidney, liver, brain, and testis (at protein level).

The protein resides in the lysosome. It carries out the reaction an aryl sulfate + H2O = a phenol + sulfate + H(+). The catalysed reaction is Hydrolysis of the 3-sulfate groups of the N-sulfo-D-glucosamine 3-O-sulfate units of heparin.. Its function is as follows. Displays arylsulfatase activity at acidic pH towards the artificial substrate p-nitrocatechol sulfate. Catalyzes the hydrolysis of the 3-sulfate groups of the N-sulfo-D-glucosamine 3-O-sulfate units of heparin. The chain is Arylsulfatase G (Arsg) from Mus musculus (Mouse).